The following is a 254-amino-acid chain: Small ribosomal subunit protein uS2 (254 aa).

It belongs to the universal ribosomal protein uS2 family.

This chain is Small ribosomal subunit protein uS2, found in Borrelia duttonii (strain Ly).